A 648-amino-acid chain; its full sequence is Shugoshin (648 aa).

Coiled coils occupy residues 95-122 (LMIK…RLSV) and 208-273 (DDRA…KDEA). Disordered regions lie at residues 188 to 239 (KVVG…RSSR), 262 to 334 (EADK…QEDA), 367 to 443 (VYRD…RPRR), 483 to 518 (TNRK…AAED), and 628 to 648 (HRAR…KVST). 2 stretches are compositionally biased toward basic and acidic residues: residues 200–217 (VRGE…HQEA) and 262–273 (EADKSRSAKDEA). Polar residues predominate over residues 306 to 315 (ASGTLTQSNE). Composition is skewed to basic and acidic residues over residues 424–440 (IVVD…DATR) and 490–509 (QREG…HEQD).

It belongs to the shugoshin family.

The protein localises to the nucleus. It localises to the chromosome. The protein resides in the centromere. Functionally, plays a central role in chromosome cohesion during cell division by preventing premature dissociation of cohesin complex from centromeres after prophase, when most of cohesin complex dissociates from chromosomes arms. May act by protecting RAD21 and or REC8 from cleavage by ESP1/separase. This is Shugoshin (SGO1) from Eremothecium gossypii (strain ATCC 10895 / CBS 109.51 / FGSC 9923 / NRRL Y-1056) (Yeast).